Consider the following 426-residue polypeptide: Glutamate-1-semialdehyde 2,1-aminomutase (426 aa).

An N6-(pyridoxal phosphate)lysine modification is found at lysine 265.

Belongs to the class-III pyridoxal-phosphate-dependent aminotransferase family. HemL subfamily. In terms of assembly, homodimer. Pyridoxal 5'-phosphate serves as cofactor.

It localises to the cytoplasm. The enzyme catalyses (S)-4-amino-5-oxopentanoate = 5-aminolevulinate. The protein operates within porphyrin-containing compound metabolism; protoporphyrin-IX biosynthesis; 5-aminolevulinate from L-glutamyl-tRNA(Glu): step 2/2. In Escherichia coli O139:H28 (strain E24377A / ETEC), this protein is Glutamate-1-semialdehyde 2,1-aminomutase.